The chain runs to 2515 residues: Protein tudor (2515 aa).

Phosphoserine occurs at positions 226, 235, and 239. Tudor domains lie at A455–I513 and Q641–M696. S800 bears the Phosphoserine mark. A disordered region spans residues Q840 to K996. Positions S890–S900 are enriched in low complexity. Residues R906–P917 show a composition bias toward polar residues. Basic and acidic residues predominate over residues R918–K927. Polar residues-rich tracts occupy residues G943 to P954 and Q964 to R976. The span at S977–A995 shows a compositional bias: low complexity. Tudor domains lie at Q1062–P1122 and K1355–H1414. The tract at residues E1515 to V1589 is disordered. A compositionally biased stretch (basic and acidic residues) spans N1540–E1553. The span at S1569–P1584 shows a compositional bias: pro residues. Tudor domains follow at residues N1662–E1718, G1839–S1898, K2023–P2082, T2211–S2269, and D2392–R2451.

May form part of a piRNA processing complex consisting of tud, aub and AGO3. Interacts with AGO3 (when symmetrically dimethylated on Arg residues) and aub (when symmetrically dimethylated on Arg residues). Interacts with vls. Interacts with me31B/DDX6 (when symmetrically dimethylated on Arg residues).

Its subcellular location is the cytoplasm. The protein localises to the perinuclear region. It localises to the cytoplasmic ribonucleoprotein granule. Functionally, may act via the Piwi-interacting RNA (piRNA) metabolic process mediated by aub and AGO3 Piwi proteins, which mediates the repression of transposable elements during meiosis by forming complexes composed of piRNAs and Piwi proteins and governs the methylation and subsequent repression of transposons. Required during oogenesis for the formation of primordial germ cells and for normal abdominal segmentation. Not involved in repression of retroelements. The polypeptide is Protein tudor (Drosophila melanogaster (Fruit fly)).